The sequence spans 412 residues: Gamma-glutamyl phosphate reductase (412 aa).

Belongs to the gamma-glutamyl phosphate reductase family.

The protein resides in the cytoplasm. The catalysed reaction is L-glutamate 5-semialdehyde + phosphate + NADP(+) = L-glutamyl 5-phosphate + NADPH + H(+). The protein operates within amino-acid biosynthesis; L-proline biosynthesis; L-glutamate 5-semialdehyde from L-glutamate: step 2/2. Its function is as follows. Catalyzes the NADPH-dependent reduction of L-glutamate 5-phosphate into L-glutamate 5-semialdehyde and phosphate. The product spontaneously undergoes cyclization to form 1-pyrroline-5-carboxylate. The protein is Gamma-glutamyl phosphate reductase of Actinobacillus pleuropneumoniae serotype 3 (strain JL03).